A 142-amino-acid chain; its full sequence is Small ribosomal subunit protein uS12 (142 aa).

This sequence belongs to the universal ribosomal protein uS12 family. In terms of assembly, part of the 30S ribosomal subunit.

In terms of biological role, with S4 and S5 plays an important role in translational accuracy. Located at the interface of the 30S and 50S subunits. The protein is Small ribosomal subunit protein uS12 of Thermoplasma volcanium (strain ATCC 51530 / DSM 4299 / JCM 9571 / NBRC 15438 / GSS1).